We begin with the raw amino-acid sequence, 427 residues long: Galactose-3-O-sulfotransferase 3 (427 aa).

Topologically, residues 1–19 (MPPIFQRLQQATKMSRRKI) are cytoplasmic. Residues 20-40 (LLLVLGCSTLSLLIHQGAQLS) form a helical; Signal-anchor for type II membrane protein membrane-spanning segment. Over 41–427 (WYPKLFPLSC…RPIRALRPGH (387 aa)) the chain is Lumenal. Residues Asn-90, Asn-109, Asn-176, and Asn-301 are each glycosylated (N-linked (GlcNAc...) asparagine). The disordered stretch occupies residues 404–427 (MRLRPEPVLDNPPPRPIRALRPGH).

It belongs to the galactose-3-O-sulfotransferase family. Mg(2+) is required as a cofactor.

The protein localises to the golgi apparatus. It localises to the golgi stack membrane. It functions in the pathway protein modification; carbohydrate sulfation. Transfers a sulfate to position 3 of non-reducing beta-galactosyl residues in N-glycans and core2-branched O-glycans. Has high activity towards Gal-beta-1,4-GlcNAc, Gal-beta-1,4(Fuc-alpha-1,3)GlcNAc and lower activity towards Gal-beta-1,3(Fuc-alpha-1,4)GlcNAc. This Bos taurus (Bovine) protein is Galactose-3-O-sulfotransferase 3 (GAL3ST3).